Here is a 766-residue protein sequence, read N- to C-terminus: Hypoxia-inducible factor 1-alpha (766 aa).

The tract at residues 1–26 (MDTGVVPEKKSRVSSDRRKEKSRDAA) is disordered. Basic and acidic residues predominate over residues 7–26 (PEKKSRVSSDRRKEKSRDAA). Residues 17 to 70 (RRKEKSRDAARCRRGKESEVFYELAQELPLPHSVTSNLDKASIMRLAISYLHMR) enclose the bHLH domain. 2 PAS domains span residues 82 to 159 (EERE…TSKK) and 230 to 300 (PHPS…FAKG). In terms of domain architecture, PAC spans 304–347 (TGQYRMLAKRGGFVWVETQATVIYNNKNSQPQCVVCVNYVLSGI). Residues 361–383 (DMRPVKKELEEEESSEPEVSPVL) form a disordered region. P426 carries the 4-hydroxyproline modification. The disordered stretch occupies residues 475–509 (DQHLVPNTSVDTTEVSTGPDSSSTPGSHSFTEPDS). Residues 479-489 (VPNTSVDTTEV) are compositionally biased toward polar residues. Over residues 490–503 (STGPDSSSTPGSHS) the composition is skewed to low complexity. The residue at position 559 (P559) is a 4-hydroxyproline. Positions 718 to 721 (LLGI) match the Nuclear localization signal motif. N743 carries the post-translational modification (3S)-3-hydroxyasparagine.

In terms of assembly, efficient DNA binding requires heterodimerization of an alpha and a beta/ARNT subunit. In normoxia, is hydroxylated on Pro-426 and Pro-559. The hydroxylated prolines promote interaction with VHL, initiating rapid ubiquitination and subsequent proteasomal degradation. Under hypoxia, proline hydroxylation is impaired and ubiquitination is attenuated, resulting in stabilization. Post-translationally, in normoxia, is hydroxylated on Asn-743, thus abrogating interaction with CREBBP and EP300 and preventing transcriptional activation. In terms of processing, the iron and 2-oxoglutarate dependent 3-hydroxylation of asparagine is (S) stereospecific within HIF CTAD domains.

It is found in the cytoplasm. It localises to the nucleus. The protein localises to the nucleus speckle. Induced by reactive oxygen species (ROS). Functions as a master transcriptional regulator of the adaptive response to hypoxia. Under hypoxic conditions, activates the transcription of over 40 genes, including erythropoietin, glucose transporters, glycolytic enzymes, vascular endothelial growth factor, HILPDA, and other genes whose protein products increase oxygen delivery or facilitate metabolic adaptation to hypoxia. Plays an essential role in embryonic vascularization, tumor angiogenesis and pathophysiology of ischemic disease. This chain is Hypoxia-inducible factor 1-alpha (hif1a), found in Oncorhynchus mykiss (Rainbow trout).